The chain runs to 168 residues: Protein OPG162 (168 aa).

At 1–14 (MKSLNRQTVSMFKK) the chain is on the intravirion side. Residues 15-37 (LSVPAAIMMILSTIISGIGTFLH) traverse the membrane as a helical segment. The Virion surface portion of the chain corresponds to 38–168 (YKEELMPSAC…SVLCVKKFYK (131 aa)). The 110-residue stretch at 54–163 (YDKHCYLDTN…CKSTQSVLCV (110 aa)) folds into the C-type lectin domain. 2 disulfide bridges follow: Cys75–Cys162 and Cys141–Cys154. N-linked (GlcNAc...) asparagine; by host glycosylation occurs at Asn133.

Belongs to the orthopoxvirus OPG162 protein family. In terms of assembly, interacts with protein OPG161. Interacts with protein OPG164. Interacts with protein OPG190.

The protein localises to the virion membrane. It localises to the host Golgi apparatus. Its function is as follows. Forms a complex with OPG162 and OPG190 to coordinate the incorporation of OPG164 into wrapped enveloped virion (EV) membranes and, subsequently, the production of actin tails. Therefore plays an essential role in efficient cell-to-cell spread of viral particles. The chain is Protein OPG162 (OPG162) from Homo sapiens (Human).